The following is a 555-amino-acid chain: Developmental and secondary metabolism regulator veA (555 aa).

3 disordered regions span residues 1–23 (MATR…RITR), 39–60 (ERAR…VDPP), and 234–533 (RRRG…TLLS). Residues 13 to 23 (ETEHSVSRITR) are compositionally biased toward basic and acidic residues. The Velvet domain maps to 25-228 (GKRITYKLNV…AEQGCRVRIR (204 aa)). The short motif at 39–44 (ERARAC) is the Nuclear localization signal element. Positions 239–258 (KRSDDYDFDEERSHRGRIPD) are enriched in basic and acidic residues. Residues 311-331 (AIPPAPAPAPPSSSTPTPVAP) are compositionally biased toward pro residues. 2 stretches are compositionally biased toward polar residues: residues 336–372 (RSSS…TQVY) and 380–389 (HARNPSTSTE). The segment at 439–479 (QTPSNAAPSLPPIASISAEYSNNLPQPPSNLAPSPNREPRG) is PEST. Composition is skewed to basic and acidic residues over residues 492–503 (RPHEDAFSHSER) and 519–533 (ADRR…TLLS).

Belongs to the velvet family. VeA subfamily. Component of the heterotrimeric velvet complex composed of laeA, veA and velB; VeA acting as a bridging protein between laeA and velB.

It localises to the nucleus. It is found in the cytoplasm. Component of the velvet transcription factor complex that controls sexual/asexual developmental ratio in response to light, promoting sexual development in the darkness while stimulating asexual sporulation under illumination. The velvet complex hat acts as a global regulator for secondary metabolite gene expression. Increases spore dispersing capacity by impacting conidiophore architecture. This is Developmental and secondary metabolism regulator veA from Aspergillus niger (strain ATCC 1015 / CBS 113.46 / FGSC A1144 / LSHB Ac4 / NCTC 3858a / NRRL 328 / USDA 3528.7).